The chain runs to 277 residues: Large ribosomal subunit protein uL2 (277 aa).

Disordered regions lie at residues Glu35–Gln60 and Met225–Arg277. Over residues Arg43–His53 the composition is skewed to polar residues.

Belongs to the universal ribosomal protein uL2 family. As to quaternary structure, part of the 50S ribosomal subunit. Forms a bridge to the 30S subunit in the 70S ribosome.

One of the primary rRNA binding proteins. Required for association of the 30S and 50S subunits to form the 70S ribosome, for tRNA binding and peptide bond formation. It has been suggested to have peptidyltransferase activity; this is somewhat controversial. Makes several contacts with the 16S rRNA in the 70S ribosome. This chain is Large ribosomal subunit protein uL2, found in Methylobacillus flagellatus (strain ATCC 51484 / DSM 6875 / VKM B-1610 / KT).